We begin with the raw amino-acid sequence, 490 residues long: Hydroxysteroid dehydrogenase-like protein 2 (490 aa).

Residues 17–23, Lys42, and Asp74 contribute to the NADP(+) site; that span reads GASRGIG. Residue Lys42 is modified to N6-(2-hydroxyisobutyryl)lysine. Lys116 carries the post-translational modification N6-acetyllysine. The active-site Proton acceptor is the Tyr168. Lys172 contacts NADP(+). The segment covering 282–301 has biased composition (basic and acidic residues); that stretch reads MEEKESNDSVPEVKEEKLQL. The interval 282–370 is disordered; sequence MEEKESNDSV…PRQQPQPFVQ (89 aa). The segment covering 302–367 has biased composition (low complexity); it reads QEESQLQKQP…QPRPRQQPQP (66 aa). The SCP2 domain occupies 380–487; that stretch reads GAVEETFRIV…KLEKLMTQMN (108 aa). N6-succinyllysine is present on Lys390.

Belongs to the short-chain dehydrogenases/reductases (SDR) family. As to expression, widely expressed.

Its subcellular location is the peroxisome. The protein localises to the mitochondrion. In terms of biological role, has apparently no steroid dehydrogenase activity. Controls bile acid (BA) and lipid metabolism in response to nutritional cues. This Mus musculus (Mouse) protein is Hydroxysteroid dehydrogenase-like protein 2 (Hsdl2).